The chain runs to 338 residues: Elongation factor Ts, mitochondrial (338 aa).

The transit peptide at 1–42 directs the protein to the mitochondrion; it reads MSPSIAMFTLTPNARALASKTSKMDLIKNLRERTGAPIVDVK.

It belongs to the EF-Ts family.

It is found in the mitochondrion. Its function is as follows. Associates with the EF-Tu.GDP complex and induces the exchange of GDP to GTP. It remains bound to the aminoacyl-tRNA.EF-Tu.GTP complex up to the GTP hydrolysis stage on the ribosome. The protein is Elongation factor Ts, mitochondrial of Ostreococcus tauri.